Here is a 216-residue protein sequence, read N- to C-terminus: Thymidine kinase (216 aa).

ATP is bound by residues 9–16 (GPMDSGKS) and 86–89 (DEAQ). Residue Glu87 is the Proton acceptor of the active site.

Belongs to the thymidine kinase family. In terms of assembly, homotetramer.

The protein localises to the cytoplasm. It catalyses the reaction thymidine + ATP = dTMP + ADP + H(+). In Cutibacterium acnes (strain DSM 16379 / KPA171202) (Propionibacterium acnes), this protein is Thymidine kinase.